Here is a 364-residue protein sequence, read N- to C-terminus: DNA replication and repair protein RecF (364 aa).

Residue 30-37 participates in ATP binding; sequence GNNGQGKT.

Belongs to the RecF family.

The protein localises to the cytoplasm. In terms of biological role, the RecF protein is involved in DNA metabolism; it is required for DNA replication and normal SOS inducibility. RecF binds preferentially to single-stranded, linear DNA. It also seems to bind ATP. In Citrifermentans bemidjiense (strain ATCC BAA-1014 / DSM 16622 / JCM 12645 / Bem) (Geobacter bemidjiensis), this protein is DNA replication and repair protein RecF.